The sequence spans 1178 residues: DNA-directed RNA polymerase I subunit 2 (1178 aa).

The C4-type zinc-finger motif lies at 1097-1137 (CSLCGSLLTSSVVNVQQKKLIQEIGKLPPGRTPKKVTCYSC).

This sequence belongs to the RNA polymerase beta chain family. Component of the RNA polymerase I (Pol I) complex consisting of at least 13 subunits.

It is found in the nucleus. The enzyme catalyses RNA(n) + a ribonucleoside 5'-triphosphate = RNA(n+1) + diphosphate. In terms of biological role, DNA-dependent RNA polymerase catalyzes the transcription of DNA into RNA using the four ribonucleoside triphosphates as substrates. Second largest core component of RNA polymerase I which synthesizes ribosomal RNA precursors. Proposed to contribute to the polymerase catalytic activity and forms the polymerase active center together with the largest subunit. Pol I is composed of mobile elements and NRPA2 is part of the core element with the central large cleft and probably a clamp element that moves to open and close the cleft. Essential for the completion of the three rounds of mitosis in female megaspores required for the development of mature gametophytes. This Arabidopsis thaliana (Mouse-ear cress) protein is DNA-directed RNA polymerase I subunit 2.